The sequence spans 160 residues: MSMTRQEIQDLCVKSLEEKMVGTTDKGIANGNGFYQYFFTNFPDLRVYFKGAEKFTAEDVKKSERFDKQGQRILLACHLIANVFTNEEVFKAYVRETINRHRIYKMDPALWMAFFTVFTGYLESTGSLNDQQKAAWMALGKEFNAECQVHLKNSNLPYVH.

Residues 2 to 152 (SMTRQEIQDL…FNAECQVHLK (151 aa)) enclose the Globin domain. Residue H101 coordinates heme.

The protein belongs to the globin family.

It localises to the cytoplasm. Its function is as follows. May be a globin and may play a role in oxygen transport. The protein is Globin-like protein (glb-1) of Caenorhabditis briggsae.